Reading from the N-terminus, the 182-residue chain is Ribosomal RNA small subunit methyltransferase G (182 aa).

S-adenosyl-L-methionine-binding positions include glycine 58, phenylalanine 63, 109–110 (IE), and arginine 123.

This sequence belongs to the methyltransferase superfamily. RNA methyltransferase RsmG family.

Its subcellular location is the cytoplasm. It carries out the reaction guanosine(527) in 16S rRNA + S-adenosyl-L-methionine = N(7)-methylguanosine(527) in 16S rRNA + S-adenosyl-L-homocysteine. Its function is as follows. Specifically methylates the N7 position of guanine in position 527 of 16S rRNA. This is Ribosomal RNA small subunit methyltransferase G from Campylobacter fetus subsp. fetus (strain 82-40).